The chain runs to 237 residues: Phosphoserine phosphatase (237 aa).

The active-site Nucleophile is the aspartate 30. The Mg(2+) site is built by aspartate 30 and aspartate 32. Residue aspartate 32 is the Proton donor of the active site. Residues glutamate 39, arginine 76, 120-121 (SG), and lysine 169 contribute to the substrate site. Aspartate 192 contacts Mg(2+). Asparagine 195 provides a ligand contact to substrate.

Belongs to the HAD-like hydrolase superfamily. SerB family. Requires Mg(2+) as cofactor.

The enzyme catalyses O-phospho-L-serine + H2O = L-serine + phosphate. It catalyses the reaction O-phospho-D-serine + H2O = D-serine + phosphate. It participates in amino-acid biosynthesis; L-serine biosynthesis; L-serine from 3-phospho-D-glycerate: step 3/3. Its function is as follows. Catalyzes the dephosphorylation of phosphoserine (P-Ser) in vitro. Also catalyzes the dephosphorylation of phosphothreonine (P-Thr) in vitro. The sequence is that of Phosphoserine phosphatase from Albidiferax ferrireducens (strain ATCC BAA-621 / DSM 15236 / T118) (Rhodoferax ferrireducens).